The primary structure comprises 775 residues: DNA polymerase (775 aa).

It belongs to the DNA polymerase type-B family. Monomer.

The enzyme catalyses DNA(n) + a 2'-deoxyribonucleoside 5'-triphosphate = DNA(n+1) + diphosphate. Its function is as follows. In addition to polymerase activity, this DNA polymerase exhibits 3' to 5' exonuclease activity. In Pyrococcus glycovorans, this protein is DNA polymerase (pol).